A 116-amino-acid polypeptide reads, in one-letter code: MSDTPLKCTTRHVRIFTATVEDNGELKASSDKLTLDLDPDNEFEWDQPVLAKVQQRFAELVDAAAGTELSDYNLRRIGTDLEGFIRQLLQAGELRYNLGARVLNYSMGLPRTPETL.

It belongs to the complex I NdhM subunit family. As to quaternary structure, NDH-1 can be composed of about 15 different subunits; different subcomplexes with different compositions have been identified which probably have different functions.

It is found in the cellular thylakoid membrane. The catalysed reaction is a plastoquinone + NADH + (n+1) H(+)(in) = a plastoquinol + NAD(+) + n H(+)(out). It carries out the reaction a plastoquinone + NADPH + (n+1) H(+)(in) = a plastoquinol + NADP(+) + n H(+)(out). In terms of biological role, NDH-1 shuttles electrons from an unknown electron donor, via FMN and iron-sulfur (Fe-S) centers, to quinones in the respiratory and/or the photosynthetic chain. The immediate electron acceptor for the enzyme in this species is believed to be plastoquinone. Couples the redox reaction to proton translocation, and thus conserves the redox energy in a proton gradient. Cyanobacterial NDH-1 also plays a role in inorganic carbon-concentration. This Synechococcus sp. (strain RCC307) protein is NAD(P)H-quinone oxidoreductase subunit M.